The chain runs to 390 residues: T-cell surface glycoprotein CD1e, membrane-associated (390 aa).

An N-terminal signal peptide occupies residues 1 to 14; the sequence is MLLLILLFFKGLVC. A propeptide spans 15-33 (removed in sCD1e); that stretch reads HEKSIVGPQPLGWHHPAEA. N-linked (GlcNAc...) asparagine glycans are attached at residues N49 and N70. Cystine bridges form between C131/C194 and C234/C288. Residues 215–306 enclose the Ig-like domain; it reads PEVWLSRGPS…GHDIIIHWGG (92 aa). The helical transmembrane segment at 305–325 threads the bilayer; it reads GGYSILLILMYVAVIVTLVTL.

In terms of assembly, heterodimer with B2M (beta-2-microglobulin). The association with B2M appears to be facilitated by the presence of the propeptide. Mono-ubiquitinated. In terms of processing, proteolytically cleaved in endosomes to yield a soluble form.

It is found in the golgi apparatus membrane. It localises to the early endosome. Its subcellular location is the late endosome. The protein localises to the lysosome lumen. Functionally, T-cell surface glycoprotein CD1e, soluble is required for the presentation of glycolipid antigens on the cell surface. The membrane-associated form is not active. The chain is T-cell surface glycoprotein CD1e, membrane-associated (CD1E) from Cavia porcellus (Guinea pig).